A 353-amino-acid chain; its full sequence is Holliday junction branch migration complex subunit RuvB (353 aa).

Residues 1 to 182 (MPERLITPKG…FGIVQRLEFY (182 aa)) form a large ATPase domain (RuvB-L) region. Residues I21, R22, G63, K66, T67, T68, 129-131 (EDF), R172, Y182, and R219 contribute to the ATP site. Residue T67 coordinates Mg(2+). Residues 183–253 (NVQDLTRIVQ…VADRALDLLD (71 aa)) form a small ATPAse domain (RuvB-S) region. Positions 256–353 (VQGFDAQDRR…QEEGGGEGKL (98 aa)) are head domain (RuvB-H). R292, R311, and R316 together coordinate DNA.

Belongs to the RuvB family. In terms of assembly, homohexamer. Forms an RuvA(8)-RuvB(12)-Holliday junction (HJ) complex. HJ DNA is sandwiched between 2 RuvA tetramers; dsDNA enters through RuvA and exits via RuvB. An RuvB hexamer assembles on each DNA strand where it exits the tetramer. Each RuvB hexamer is contacted by two RuvA subunits (via domain III) on 2 adjacent RuvB subunits; this complex drives branch migration. In the full resolvosome a probable DNA-RuvA(4)-RuvB(12)-RuvC(2) complex forms which resolves the HJ.

It localises to the cytoplasm. It catalyses the reaction ATP + H2O = ADP + phosphate + H(+). Functionally, the RuvA-RuvB-RuvC complex processes Holliday junction (HJ) DNA during genetic recombination and DNA repair, while the RuvA-RuvB complex plays an important role in the rescue of blocked DNA replication forks via replication fork reversal (RFR). RuvA specifically binds to HJ cruciform DNA, conferring on it an open structure. The RuvB hexamer acts as an ATP-dependent pump, pulling dsDNA into and through the RuvAB complex. RuvB forms 2 homohexamers on either side of HJ DNA bound by 1 or 2 RuvA tetramers; 4 subunits per hexamer contact DNA at a time. Coordinated motions by a converter formed by DNA-disengaged RuvB subunits stimulates ATP hydrolysis and nucleotide exchange. Immobilization of the converter enables RuvB to convert the ATP-contained energy into a lever motion, pulling 2 nucleotides of DNA out of the RuvA tetramer per ATP hydrolyzed, thus driving DNA branch migration. The RuvB motors rotate together with the DNA substrate, which together with the progressing nucleotide cycle form the mechanistic basis for DNA recombination by continuous HJ branch migration. Branch migration allows RuvC to scan DNA until it finds its consensus sequence, where it cleaves and resolves cruciform DNA. In Thioalkalivibrio sulfidiphilus (strain HL-EbGR7), this protein is Holliday junction branch migration complex subunit RuvB.